Reading from the N-terminus, the 418-residue chain is Glutamyl-tRNA reductase (418 aa).

Substrate-binding positions include 49–52 (TCNR), Ser-109, 114–116 (EPQ), and Gln-120. Cys-50 acts as the Nucleophile in catalysis. 189–194 (GAGETI) is a binding site for NADP(+).

The protein belongs to the glutamyl-tRNA reductase family. In terms of assembly, homodimer.

It carries out the reaction (S)-4-amino-5-oxopentanoate + tRNA(Glu) + NADP(+) = L-glutamyl-tRNA(Glu) + NADPH + H(+). It functions in the pathway porphyrin-containing compound metabolism; protoporphyrin-IX biosynthesis; 5-aminolevulinate from L-glutamyl-tRNA(Glu): step 1/2. Its function is as follows. Catalyzes the NADPH-dependent reduction of glutamyl-tRNA(Glu) to glutamate 1-semialdehyde (GSA). This chain is Glutamyl-tRNA reductase, found in Citrobacter koseri (strain ATCC BAA-895 / CDC 4225-83 / SGSC4696).